The primary structure comprises 318 residues: Formimidoylglutamase (318 aa).

H130, D155, H157, D159, D246, and D248 together coordinate Mn(2+).

It belongs to the arginase family. Mn(2+) is required as a cofactor.

The enzyme catalyses N-formimidoyl-L-glutamate + H2O = formamide + L-glutamate. It functions in the pathway amino-acid degradation; L-histidine degradation into L-glutamate; L-glutamate from N-formimidoyl-L-glutamate (hydrolase route): step 1/1. Its function is as follows. Catalyzes the conversion of N-formimidoyl-L-glutamate to L-glutamate and formamide. This Klebsiella pneumoniae (strain 342) protein is Formimidoylglutamase.